Consider the following 181-residue polypeptide: Adenylate kinase (181 aa).

ATP is bound at residue 10 to 15; it reads GAGKGT. The segment at 30-59 is NMP; it reads STGELFRKNIQDGTKLGVEAKRYLDAGDLV. AMP contacts are provided by residues threonine 31, arginine 36, 57–59, 85–88, and glutamine 92; these read DLV and GYPR. The segment at 126-132 is LID; that stretch reads GRGRADD. Position 127 (arginine 127) interacts with ATP. AMP is bound by residues arginine 129 and arginine 140. Glycine 166 lines the ATP pocket.

It belongs to the adenylate kinase family. Monomer.

It localises to the cytoplasm. The enzyme catalyses AMP + ATP = 2 ADP. It functions in the pathway purine metabolism; AMP biosynthesis via salvage pathway; AMP from ADP: step 1/1. Its function is as follows. Catalyzes the reversible transfer of the terminal phosphate group between ATP and AMP. Plays an important role in cellular energy homeostasis and in adenine nucleotide metabolism. In Mycobacterium ulcerans (strain Agy99), this protein is Adenylate kinase.